The primary structure comprises 431 residues: Glutamate-1-semialdehyde 2,1-aminomutase (431 aa).

Lys269 is modified (N6-(pyridoxal phosphate)lysine).

It belongs to the class-III pyridoxal-phosphate-dependent aminotransferase family. HemL subfamily. Homodimer. It depends on pyridoxal 5'-phosphate as a cofactor.

The protein localises to the cytoplasm. The catalysed reaction is (S)-4-amino-5-oxopentanoate = 5-aminolevulinate. It participates in porphyrin-containing compound metabolism; protoporphyrin-IX biosynthesis; 5-aminolevulinate from L-glutamyl-tRNA(Glu): step 2/2. This Francisella tularensis subsp. holarctica (strain LVS) protein is Glutamate-1-semialdehyde 2,1-aminomutase.